The sequence spans 57 residues: UPF0391 membrane protein RPC_2356 (57 aa).

Helical transmembrane passes span 6–26 (WALI…TGIS) and 35–55 (ILFY…LTIF).

This sequence belongs to the UPF0391 family.

Its subcellular location is the cell membrane. This Rhodopseudomonas palustris (strain BisB18) protein is UPF0391 membrane protein RPC_2356.